The primary structure comprises 382 residues: Beta-1,4-galactosyltransferase 6 (382 aa).

The Cytoplasmic portion of the chain corresponds to 1–15 (MSALKRMMRVSNRSL). A helical; Signal-anchor for type II membrane protein transmembrane segment spans residues 16–35 (IAFIFFFSLSTSCLYFIYVA). The Lumenal portion of the chain corresponds to 36–382 (PGIANTYLFM…MPELAPVEDY (347 aa)). Residues Asn71, Asn75, Asn83, Asn84, Asn99, and Asn122 are each glycosylated (N-linked (GlcNAc...) asparagine). Residues Cys108 and Cys152 are joined by a disulfide bond. UDP-alpha-D-galactose contacts are provided by residues 163–167 (PFRNR), 202–204 (FNR), 229–230 (VD), Tyr258, and Trp290. Cys223 and Cys242 are disulfide-bonded. Asp230 contacts Mn(2+). 292-295 (GEDD) provides a ligand contact to N-acetyl-D-glucosamine. Asn307 carries N-linked (GlcNAc...) asparagine glycosylation. His323 serves as a coordination point for Mn(2+). UDP-alpha-D-galactose is bound at residue 323–324 (HH). Residue Arg334 participates in N-acetyl-D-glucosamine binding. Residue Asn367 is glycosylated (N-linked (GlcNAc...) asparagine).

The protein belongs to the glycosyltransferase 7 family. The cofactor is Mn(2+). Mg(2+) serves as cofactor. It depends on Ca(2+) as a cofactor. Highest expression in brain with lower levels found in lungs, heart, skeletal muscle and kidney. Lowest expression in testis, liver and spleen.

The protein localises to the golgi apparatus. It is found in the golgi stack membrane. The enzyme catalyses a beta-D-glucosyl-(1&lt;-&gt;1')-N-acylsphing-4-enine + UDP-alpha-D-galactose = a beta-D-Gal-(1-&gt;4)-beta-D-Glc-(1&lt;-&gt;1)-Cer(d18:1(4E)) + UDP + H(+). Its pathway is protein modification; protein glycosylation. It functions in the pathway sphingolipid metabolism. With respect to regulation, inhibited by EDTA. Catalyzes the synthesis of lactosylceramide (LacCer) via the transfer of galactose from UDP-galactose to glucosylceramide (GlcCer). LacCer is the starting point in the biosynthesis of all gangliosides (membrane-bound glycosphingolipids) which play pivotal roles in the CNS including neuronal maturation and axonal and myelin formation. The sequence is that of Beta-1,4-galactosyltransferase 6 from Rattus norvegicus (Rat).